Here is a 1401-residue protein sequence, read N- to C-terminus: DNA-directed RNA polymerase subunit beta (1401 aa).

This sequence belongs to the RNA polymerase beta chain family. The RNAP catalytic core consists of 2 alpha, 1 beta, 1 beta' and 1 omega subunit. When a sigma factor is associated with the core the holoenzyme is formed, which can initiate transcription.

It carries out the reaction RNA(n) + a ribonucleoside 5'-triphosphate = RNA(n+1) + diphosphate. Functionally, DNA-dependent RNA polymerase catalyzes the transcription of DNA into RNA using the four ribonucleoside triphosphates as substrates. This chain is DNA-directed RNA polymerase subunit beta, found in Desulforapulum autotrophicum (strain ATCC 43914 / DSM 3382 / VKM B-1955 / HRM2) (Desulfobacterium autotrophicum).